The following is a 535-amino-acid chain: E3 ubiquitin-protein ligase rnf168 (535 aa).

The RING-type zinc finger occupies 16 to 55; the sequence is CPICQEILLEPVTLPCKHTLCNPCFQMTVEKASLCCPFCR. The short motif at 112 to 130 is the LR motif 1 element; sequence LCKPGEIRQEYEAEVSKIE. The UMI motif motif lies at 145–153; that stretch reads EDYIQKLLA. 2 consecutive short sequence motifs (MIU motif) follow at residues 170–193 and 406–429; these read IEEQ…LSNA and RRKQ…KELK. The segment covering 429–443 has biased composition (basic and acidic residues); it reads KQVNRGKGSPDEYQL. The segment at 429–535 is disordered; sequence KQVNRGKGSP…LDLFQRSAGK (107 aa). Positions 433 to 444 match the LR motif 2 motif; it reads RGKGSPDEYQLR. 2 stretches are compositionally biased toward polar residues: residues 462–478 and 492–507; these read NEQT…QSGY and ITSS…TNTE.

This sequence belongs to the RNF168 family. Monomer.

The protein localises to the nucleus. It carries out the reaction S-ubiquitinyl-[E2 ubiquitin-conjugating enzyme]-L-cysteine + [acceptor protein]-L-lysine = [E2 ubiquitin-conjugating enzyme]-L-cysteine + N(6)-ubiquitinyl-[acceptor protein]-L-lysine.. It participates in protein modification; protein ubiquitination. Functionally, E3 ubiquitin-protein ligase required for accumulation of repair proteins to sites of DNA damage. Acts with ube2n/ubc13 to amplify the rnf8-dependent histone ubiquitination. Recruited to sites of DNA damage at double-strand breaks (DSBs) by binding to ubiquitinated histone H2A and ubiquitinates histone H2A and H2AX, leading to amplify the rnf8-dependent H2A ubiquitination and promoting the formation of 'Lys-63'-linked ubiquitin conjugates. This leads to concentrate ubiquitinated histones H2A and H2AX at DNA lesions to the threshold required for recruitment of tp53bp1 and brca1. Catalyzes monoubiquitination of 'Lys-13' and 'Lys-15' of nucleosomal histone H2A (H2AK13Ub and H2AK15Ub, respectively). The chain is E3 ubiquitin-protein ligase rnf168 from Xenopus tropicalis (Western clawed frog).